Here is an 881-residue protein sequence, read N- to C-terminus: MGCLGNQLLIAILLLSVYGIYCTQYVTVFYGVPAWRNATIPLFCATKNRDTWGTTQCLPDNGDYSELALNVTESFDAWENTVTEQAIEDVWQLFETSIKPCVKLSPLCITMRCNKSETDRWGLTKSSTTITTAAPTSAPVSEKIDMVNETSSCIAQNNCTGLEQEQMISCKFTMTGLKRDKTKEYNETWYSTDLVCEQGNSTDNESRCYMNHCNTSVIQESCDKHYWDTIRFRYCAPPGYALLRCNDTNYSGFMPKCSKVVVSSCTRMMETQTSTWFGFNGTRAENRTYIYWHGRDNRTIISLNKYYNLTMKCRRPGNKTVLPVTIMSGLVFHSQPLTDRPKQAWCWFGGKWKDAIKEVKQTIVKHPRYTGTNNTDKINLTAPGGGDPEVTFMWTNCRGEFLYCKMNWFLNWVEDRDVTTQRPKERHRRNYVPCHIRQIINTWHKVGKNVYLPPREGDLTCNSTVTSLIANIDWTDGNQTSITMSAEVAELYRLELGDYKLVEITPIGLAPTDVKRYTTGGTSRNKRGVFVLGFLGFLATAGSAMGAASFRLTAQSRTLLAGIVQQQQQLLGVVKRQQELLRLTVWGTKNLQTRVTAIEKYLEDQAQLNAWGCAFRQVCHTTVPWPNASLTPDWNNDTWQEWERKVDFLEENITALLEEAQIQQEKNMYELQKLNSWDVFGNWFDLASWIKYIQYGIYVVVGVILLRIVIYIVQMLAKLRQGYRPVFSSPPSYFQXTHTQQDPALPTREGKEGDGGEGGGNSSWPWQIEYIHFLIRQLIRLLTWLFSNCRTLLSRAYQILQPILQRLSATLRRIREVLRTELTYLQYGWSYFHEAVQAGWRSATETLAGAWGDLWETLRRGGRWILAIPRRIRQGLELTLL.

The N-terminal stretch at 1–19 (MGCLGNQLLIAILLLSVYG) is a signal peptide. Over 20-696 (IYCTQYVTVF…ASWIKYIQYG (677 aa)) the chain is Extracellular. Asn-37 carries an N-linked (GlcNAc...) asparagine; by host glycan. The cysteines at positions 44 and 57 are disulfide-linked. N-linked (GlcNAc...) asparagine; by host glycans are attached at residues Asn-70, Asn-114, Asn-148, Asn-158, Asn-186, Asn-200, Asn-204, Asn-214, Asn-246, Asn-249, Asn-280, Asn-286, Asn-297, Asn-308, Asn-318, Asn-373, and Asn-379. Cystine bridges form between Cys-101–Cys-222, Cys-108–Cys-213, Cys-113–Cys-170, Cys-235–Cys-265, and Cys-245–Cys-257. The segment at 113-169 (CNKSETDRWGLTKSSTTITTAAPTSAPVSEKIDMVNETSSCIAQNNCTGLEQEQMIS) is V1. The segment at 170 to 213 (CKFTMTGLKRDKTKEYNETWYSTDLVCEQGNSTDNESRCYMNHC) is V2. Residues 313–345 (CRRPGNKTVLPVTIMSGLVFHSQPLTDRPKQAW) are V3. Cysteines 313 and 346 form a disulfide. 2 disulfides stabilise this stretch: Cys-397–Cys-461 and Cys-404–Cys-434. The tract at residues 404 to 434 (CKMNWFLNWVEDRDVTTQRPKERHRRNYVPC) is V4. N-linked (GlcNAc...) asparagine; by host glycans are attached at residues Asn-462 and Asn-478. Residues 477–484 (GNQTSITM) form a V5 region. Residues 528 to 548 (GVFVLGFLGFLATAGSAMGAA) form a fusion peptide region. The segment at 591-607 (LQTRVTAIEKYLEDQAQ) is immunosuppression. Residues Asn-627, Asn-636, and Asn-652 are each glycosylated (N-linked (GlcNAc...) asparagine; by host). A coiled-coil region spans residues 636–668 (NDTWQEWERKVDFLEENITALLEEAQIQQEKNM). The interval 673–694 (KLNSWDVFGNWFDLASWIKYIQ) is MPER; binding to GalCer. The chain crosses the membrane as a helical span at residues 697–717 (IYVVVGVILLRIVIYIVQMLA). Over 718–881 (KLRQGYRPVF…IRQGLELTLL (164 aa)) the chain is Cytoplasmic. The YXXV motif; contains endocytosis signal motif lies at 723–726 (YRPV). The interval 737-761 (THTQQDPALPTREGKEGDGGEGGGN) is disordered. Residue Cys-789 is the site of S-palmitoyl cysteine; by host attachment. The short motif at 880 to 881 (LL) is the Di-leucine internalization motif element.

As to quaternary structure, the mature envelope protein (Env) consists of a homotrimer of non-covalently associated gp120-gp41 heterodimers. The resulting complex protrudes from the virus surface as a spike. Interacts with host CD4 and CCR5. Gp120 also interacts with the C-type lectins CD209/DC-SIGN and CLEC4M/DC-SIGNR (collectively referred to as DC-SIGN(R)). In terms of assembly, the mature envelope protein (Env) consists of a homotrimer of non-covalently associated gp120-gp41 heterodimers. The resulting complex protrudes from the virus surface as a spike. Post-translationally, specific enzymatic cleavages in vivo yield mature proteins. Envelope glycoproteins are synthesized as an inactive precursor that is heavily N-glycosylated and processed likely by host cell furin in the Golgi to yield the mature SU and TM proteins. The cleavage site between SU and TM requires the minimal sequence [KR]-X-[KR]-R. Palmitoylation of the transmembrane protein and of Env polyprotein (prior to its proteolytic cleavage) is essential for their association with host cell membrane lipid rafts. Palmitoylation is therefore required for envelope trafficking to classical lipid rafts, but not for viral replication.

The protein resides in the virion membrane. It localises to the host cell membrane. It is found in the host endosome membrane. Functionally, the surface protein gp120 (SU) attaches the virus to the host lymphoid cell by binding to the primary receptor CD4. This interaction induces a structural rearrangement creating a high affinity binding site for a chemokine coreceptor like CCR5. This peculiar 2 stage receptor-interaction strategy allows gp120 to maintain the highly conserved coreceptor-binding site in a cryptic conformation, protected from neutralizing antibodies. These changes are transmitted to the transmembrane protein gp41 and are thought to activate its fusogenic potential by unmasking its fusion peptide. Its function is as follows. Surface protein gp120 (SU) may target the virus to gut-associated lymphoid tissue (GALT) by binding host ITGA4/ITGB7 (alpha-4/beta-7 integrins), a complex that mediates T-cell migration to the GALT. Interaction between gp120 and ITGA4/ITGB7 would allow the virus to enter GALT early in the infection, infecting and killing most of GALT's resting CD4+ T-cells. This T-cell depletion is believed to be the major insult to the host immune system leading to AIDS. In terms of biological role, the surface protein gp120 is a ligand for CD209/DC-SIGN and CLEC4M/DC-SIGNR, which are respectively found on dendritic cells (DCs), and on endothelial cells of liver sinusoids and lymph node sinuses. These interactions allow capture of viral particles at mucosal surfaces by these cells and subsequent transmission to permissive cells. DCs are professional antigen presenting cells, critical for host immunity by inducing specific immune responses against a broad variety of pathogens. They act as sentinels in various tissues where they take up antigen, process it, and present it to T-cells following migration to lymphoid organs. SIV subverts the migration properties of dendritic cells to gain access to CD4+ T-cells in lymph nodes. Virus transmission to permissive T-cells occurs either in trans (without DCs infection, through viral capture and transmission), or in cis (following DCs productive infection, through the usual CD4-gp120 interaction), thereby inducing a robust infection. In trans infection, bound virions remain infectious over days and it is proposed that they are not degraded, but protected in non-lysosomal acidic organelles within the DCs close to the cell membrane thus contributing to the viral infectious potential during DCs' migration from the periphery to the lymphoid tissues. On arrival at lymphoid tissues, intact virions recycle back to DCs' cell surface allowing virus transmission to CD4+ T-cells. Virion capture also seems to lead to MHC-II-restricted viral antigen presentation, and probably to the activation of SIV-specific CD4+ cells. The transmembrane protein gp41 (TM) acts as a class I viral fusion protein. Under the current model, the protein has at least 3 conformational states: pre-fusion native state, pre-hairpin intermediate state, and post-fusion hairpin state. During fusion of viral and target intracellular membranes, the coiled coil regions (heptad repeats) assume a trimer-of-hairpins structure, positioning the fusion peptide in close proximity to the C-terminal region of the ectodomain. The formation of this structure appears to drive apposition and subsequent fusion of viral and target cell membranes. Complete fusion occurs in host cell endosomes. The virus undergoes clathrin-dependent internalization long before endosomal fusion, thus minimizing the surface exposure of conserved viral epitopes during fusion and reducing the efficacy of inhibitors targeting these epitopes. Membranes fusion leads to delivery of the nucleocapsid into the cytoplasm. Functionally, the envelope glycoprotein gp160 precursor down-modulates cell surface CD4 antigen by interacting with it in the endoplasmic reticulum and blocking its transport to the cell surface. Its function is as follows. The gp120-gp41 heterodimer allows rapid transcytosis of the virus through CD4 negative cells such as simple epithelial monolayers of the intestinal, rectal and endocervical epithelial barriers. Both gp120 and gp41 specifically recognize glycosphingolipids galactosyl-ceramide (GalCer) or 3' sulfo-galactosyl-ceramide (GalS) present in the lipid rafts structures of epithelial cells. Binding to these alternative receptors allows the rapid transcytosis of the virus through the epithelial cells. This transcytotic vesicle-mediated transport of virions from the apical side to the basolateral side of the epithelial cells does not involve infection of the cells themselves. This chain is Envelope glycoprotein gp160 (env), found in Simian immunodeficiency virus (isolate K6W) (SIV-mac).